A 431-amino-acid chain; its full sequence is Adenylosuccinate synthetase (431 aa).

GTP-binding positions include 13-19 and 41-43; these read GDEGKGK and GHT. The Proton acceptor role is filled by Asp-14. Positions 14 and 41 each coordinate Mg(2+). Residues 14–17, 39–42, Thr-130, Arg-144, Gln-225, Thr-240, and Arg-304 each bind IMP; these read DEGK and NAGH. The Proton donor role is filled by His-42. 300 to 306 provides a ligand contact to substrate; that stretch reads ATTGRKR. Residues Arg-306, 332–334, and 415–417 contribute to the GTP site; these read KLD and STG.

The protein belongs to the adenylosuccinate synthetase family. In terms of assembly, homodimer. It depends on Mg(2+) as a cofactor.

The protein localises to the cytoplasm. The catalysed reaction is IMP + L-aspartate + GTP = N(6)-(1,2-dicarboxyethyl)-AMP + GDP + phosphate + 2 H(+). It functions in the pathway purine metabolism; AMP biosynthesis via de novo pathway; AMP from IMP: step 1/2. Plays an important role in the de novo pathway of purine nucleotide biosynthesis. Catalyzes the first committed step in the biosynthesis of AMP from IMP. The chain is Adenylosuccinate synthetase from Shewanella oneidensis (strain ATCC 700550 / JCM 31522 / CIP 106686 / LMG 19005 / NCIMB 14063 / MR-1).